The following is a 312-amino-acid chain: uncharacterized protein (312 aa).

This is an uncharacterized protein from Mycoplasma (Bacteriophage L2).